A 457-amino-acid chain; its full sequence is Ribulose bisphosphate carboxylase large chain (457 aa).

The propeptide occupies 1–2; the sequence is MS. Pro3 carries the N-acetylproline modification. The residue at position 14 (Lys14) is an N6,N6,N6-trimethyllysine. Asn123 and Thr173 together coordinate substrate. Lys175 (proton acceptor) is an active-site residue. Lys177 provides a ligand contact to substrate. 3 residues coordinate Mg(2+): Lys201, Asp203, and Glu204. At Lys201 the chain carries N6-carboxylysine. The active-site Proton acceptor is the His294. Positions 295, 327, and 379 each coordinate substrate.

The protein belongs to the RuBisCO large chain family. Type I subfamily. In terms of assembly, heterohexadecamer of 8 large chains and 8 small chains; disulfide-linked. The disulfide link is formed within the large subunit homodimers. It depends on Mg(2+) as a cofactor. The disulfide bond which can form in the large chain dimeric partners within the hexadecamer appears to be associated with oxidative stress and protein turnover.

The protein resides in the plastid. The protein localises to the chloroplast. It carries out the reaction 2 (2R)-3-phosphoglycerate + 2 H(+) = D-ribulose 1,5-bisphosphate + CO2 + H2O. The catalysed reaction is D-ribulose 1,5-bisphosphate + O2 = 2-phosphoglycolate + (2R)-3-phosphoglycerate + 2 H(+). Its function is as follows. RuBisCO catalyzes two reactions: the carboxylation of D-ribulose 1,5-bisphosphate, the primary event in carbon dioxide fixation, as well as the oxidative fragmentation of the pentose substrate in the photorespiration process. Both reactions occur simultaneously and in competition at the same active site. This chain is Ribulose bisphosphate carboxylase large chain, found in Phelline comosa.